We begin with the raw amino-acid sequence, 70 residues long: Small ribosomal subunit protein bS21 (70 aa).

Belongs to the bacterial ribosomal protein bS21 family.

This chain is Small ribosomal subunit protein bS21, found in Sulfurimonas denitrificans (strain ATCC 33889 / DSM 1251) (Thiomicrospira denitrificans (strain ATCC 33889 / DSM 1251)).